We begin with the raw amino-acid sequence, 158 residues long: MAIFEGSFTTASNLKVGIVVARFNDLITNKILSGCLDCLKRHGLDTSETSETLDIVWVPGSFELPIAAKTLLKKSNYDVLISLGAVIRGETSHYDVVISEASKGIAQVSYDYDVPIIFGVLTTDSMQQALERAGIKNNLGWNYALQAIEMGSLIKNLN.

Residues F23, 61 to 63 (SFE), and 85 to 87 (AVI) each bind 5-amino-6-(D-ribitylamino)uracil. Residue 90-91 (ET) coordinates (2S)-2-hydroxy-3-oxobutyl phosphate. The Proton donor role is filled by H93. Position 118 (F118) interacts with 5-amino-6-(D-ribitylamino)uracil. Residue R132 participates in (2S)-2-hydroxy-3-oxobutyl phosphate binding.

The protein belongs to the DMRL synthase family.

It carries out the reaction (2S)-2-hydroxy-3-oxobutyl phosphate + 5-amino-6-(D-ribitylamino)uracil = 6,7-dimethyl-8-(1-D-ribityl)lumazine + phosphate + 2 H2O + H(+). It functions in the pathway cofactor biosynthesis; riboflavin biosynthesis; riboflavin from 2-hydroxy-3-oxobutyl phosphate and 5-amino-6-(D-ribitylamino)uracil: step 1/2. Functionally, catalyzes the formation of 6,7-dimethyl-8-ribityllumazine by condensation of 5-amino-6-(D-ribitylamino)uracil with 3,4-dihydroxy-2-butanone 4-phosphate. This is the penultimate step in the biosynthesis of riboflavin. In Prochlorococcus marinus (strain MIT 9515), this protein is 6,7-dimethyl-8-ribityllumazine synthase.